Reading from the N-terminus, the 403-residue chain is Phosphopentomutase (403 aa).

Positions 13, 298, 303, 339, 340, and 351 each coordinate Mn(2+).

The protein belongs to the phosphopentomutase family. Mn(2+) serves as cofactor.

It is found in the cytoplasm. The catalysed reaction is 2-deoxy-alpha-D-ribose 1-phosphate = 2-deoxy-D-ribose 5-phosphate. It catalyses the reaction alpha-D-ribose 1-phosphate = D-ribose 5-phosphate. It participates in carbohydrate degradation; 2-deoxy-D-ribose 1-phosphate degradation; D-glyceraldehyde 3-phosphate and acetaldehyde from 2-deoxy-alpha-D-ribose 1-phosphate: step 1/2. Functionally, isomerase that catalyzes the conversion of deoxy-ribose 1-phosphate (dRib-1-P) and ribose 1-phosphate (Rib-1-P) to deoxy-ribose 5-phosphate (dRib-5-P) and ribose 5-phosphate (Rib-5-P), respectively. In Streptococcus pyogenes serotype M28 (strain MGAS6180), this protein is Phosphopentomutase.